A 126-amino-acid polypeptide reads, in one-letter code: Histone H2B 1.1 (126 aa).

Over residues 1-12 (MPEPAKSAPAPK) the composition is skewed to low complexity. A disordered region spans residues 1–35 (MPEPAKSAPAPKKGSKKAVTKTQKKDGKKRRKSRK). N6-acetyllysine is present on residues Lys6 and Lys13. Ser15 bears the Phosphoserine mark. An N6-acetyllysine mark is found at Lys16 and Lys21. Ser113 carries O-linked (GlcNAc) serine glycosylation. A Glycyl lysine isopeptide (Lys-Gly) (interchain with G-Cter in ubiquitin) cross-link involves residue Lys121.

The protein belongs to the histone H2B family. The nucleosome is a histone octamer containing two molecules each of H2A, H2B, H3 and H4 assembled in one H3-H4 heterotetramer and two H2A-H2B heterodimers. The octamer wraps approximately 147 bp of DNA. Post-translationally, monoubiquitination of Lys-121 by BRE1 gives a specific tag for epigenetic transcriptional activation and is also prerequisite for histone H3 'Lys-4' and 'Lys-79' methylation. In terms of processing, phosphorylated on Ser-15 during developmentally programmed apoptosis; which may facilitate apoptotic chromatin condensation. GlcNAcylation at Ser-113 promotes monoubiquitination of Lys-121. It fluctuates in response to extracellular glucose, and associates with transcribed genes.

The protein localises to the nucleus. Its subcellular location is the chromosome. Core component of nucleosome. Nucleosomes wrap and compact DNA into chromatin, limiting DNA accessibility to the cellular machineries which require DNA as a template. Histones thereby play a central role in transcription regulation, DNA repair, DNA replication and chromosomal stability. DNA accessibility is regulated via a complex set of post-translational modifications of histones, also called histone code, and nucleosome remodeling. In Xenopus laevis (African clawed frog), this protein is Histone H2B 1.1.